Reading from the N-terminus, the 153-residue chain is Endoribonuclease YbeY (153 aa).

Positions 114, 118, and 124 each coordinate Zn(2+).

Belongs to the endoribonuclease YbeY family. Zn(2+) is required as a cofactor.

The protein localises to the cytoplasm. Single strand-specific metallo-endoribonuclease involved in late-stage 70S ribosome quality control and in maturation of the 3' terminus of the 16S rRNA. This Shewanella denitrificans (strain OS217 / ATCC BAA-1090 / DSM 15013) protein is Endoribonuclease YbeY.